The following is a 201-amino-acid chain: Large ribosomal subunit protein uL4 (201 aa).

The tract at residues 39–72 (KRQGTSAQKSRSEVIGSGKKPWRQKGTGRARAGS) is disordered.

It belongs to the universal ribosomal protein uL4 family. As to quaternary structure, part of the 50S ribosomal subunit.

Its function is as follows. One of the primary rRNA binding proteins, this protein initially binds near the 5'-end of the 23S rRNA. It is important during the early stages of 50S assembly. It makes multiple contacts with different domains of the 23S rRNA in the assembled 50S subunit and ribosome. Forms part of the polypeptide exit tunnel. This chain is Large ribosomal subunit protein uL4, found in Wigglesworthia glossinidia brevipalpis.